The sequence spans 365 residues: Peptide chain release factor 2 (365 aa).

Residue Q252 is modified to N5-methylglutamine.

Belongs to the prokaryotic/mitochondrial release factor family. In terms of processing, methylated by PrmC. Methylation increases the termination efficiency of RF2.

It is found in the cytoplasm. In terms of biological role, peptide chain release factor 2 directs the termination of translation in response to the peptide chain termination codons UGA and UAA. This chain is Peptide chain release factor 2, found in Tolumonas auensis (strain DSM 9187 / NBRC 110442 / TA 4).